A 926-amino-acid chain; its full sequence is Storkhead-box protein 2 (926 aa).

7 disordered regions span residues 1–32 (MKKT…RSEK), 338–393 (EEEK…DIPG), 452–529 (EMPF…SYID), 564–586 (KEPS…PSYG), 633–693 (VKKL…SLDK), 723–802 (LLKS…VGTM), and 823–926 (TLLT…VTSV). Residues 18-32 (FSDRASDRMRSRSEK) show a composition bias toward basic and acidic residues. Residues 353–378 (HSGRSKKSRTHRKSHGKSRSHSKTRV) are compositionally biased toward basic residues. A compositionally biased stretch (basic and acidic residues) spans 379–393 (SKGDPSDGSHLDIPG). Residues 463–472 (SHSKVHRSHS) are compositionally biased toward basic residues. Over residues 473–495 (HTQDRRSRNERSNKAKERSRSMD) the composition is skewed to basic and acidic residues. A compositionally biased stretch (polar residues) spans 518–529 (QDDQTPSQSYID). Basic and acidic residues-rich tracts occupy residues 633 to 658 (VKKL…EESP) and 684 to 693 (HSAEPSSLDK). Polar residues predominate over residues 746-769 (LGTSAAQAMPPSQRQQEPGGNQEA). Basic and acidic residues predominate over residues 785 to 799 (GANKNAEEEKNRDDV). 2 stretches are compositionally biased toward polar residues: residues 847–884 (MDSS…QNPA) and 914–926 (KPSN…VTSV).

The protein is Storkhead-box protein 2 (Stox2) of Mus musculus (Mouse).